The primary structure comprises 463 residues: Cysteine--tRNA ligase (463 aa).

Cysteine 28 lines the Zn(2+) pocket. A 'HIGH' region motif is present at residues 30–40; that stretch reads ITPYDLCHIGH. Positions 211, 236, and 240 each coordinate Zn(2+). Positions 268–272 match the 'KMSKS' region motif; the sequence is KMSKS. ATP is bound at residue lysine 271.

Belongs to the class-I aminoacyl-tRNA synthetase family. Monomer. Requires Zn(2+) as cofactor.

It localises to the cytoplasm. The enzyme catalyses tRNA(Cys) + L-cysteine + ATP = L-cysteinyl-tRNA(Cys) + AMP + diphosphate. The chain is Cysteine--tRNA ligase from Wigglesworthia glossinidia brevipalpis.